A 277-amino-acid polypeptide reads, in one-letter code: Large ribosomal subunit protein uL2m (277 aa).

Positions 225–263 (AMNPVDHPHGGGEGKTSGGRPSVTPWSWPTKGQPTRSKR) are disordered. Residues 248 to 259 (TPWSWPTKGQPT) are compositionally biased toward polar residues.

The protein belongs to the universal ribosomal protein uL2 family.

It localises to the mitochondrion. This is Large ribosomal subunit protein uL2m (RPL2) from Reclinomonas americana.